Here is a 404-residue protein sequence, read N- to C-terminus: Zinc transporter 10 (404 aa).

The first 22 residues, 1–22 (MESSSSSSYIPFIRQIAASVSA), serve as a signal peptide directing secretion. Residues 23–49 (ASCDAVVGGGGDKDEECRDEAAALRLK) lie on the Extracellular side of the membrane. A helical membrane pass occupies residues 50–70 (MVAVAAILIAGAAGVAIPLVG). The Cytoplasmic segment spans residues 71–86 (RRRRGGGGGGGGGASS). The helical transmembrane segment at 87–107 (GGLFVLAKAFAAGVILATGFV) threads the bilayer. The Extracellular portion of the chain corresponds to 108–129 (HMLHDAEHALSNPCLPHSPWRR). A helical transmembrane segment spans residues 130–150 (FPFPGFVAMLAALATLVVDFV). Over 151-248 (GTHFYERKHR…GHEEGPSARH (98 aa)) the chain is Cytoplasmic. The helical transmembrane segment at 249 to 269 (VVVSQILELGIVSHSVIIGLS) threads the bilayer. The Extracellular segment spans residues 270-280 (LGVSQSPCTIK). The helical transmembrane segment at 281 to 301 (PLVAALSFHQFFEGFALGGCI) threads the bilayer. Over 302–311 (SEAQLKNFSA) the chain is Cytoplasmic. Residues 312–332 (FLMAFFFAITTPAGITVGAAV) traverse the membrane as a helical segment. Residues 333–343 (ASFYNPNSPRA) are Extracellular-facing. Residues 344–364 (LVVEGILDSMSAGILIYMALV) traverse the membrane as a helical segment. Residues 365–383 (DLIAADFLSRKMSCNPRLQ) lie on the Cytoplasmic side of the membrane. A helical membrane pass occupies residues 384-404 (VGSYIALFLGAMAMAALALWA).

It belongs to the ZIP transporter (TC 2.A.5) family.

The protein resides in the cell membrane. In terms of biological role, zinc transporter that may be involved in zinc uptake from the rhizosphere. The chain is Zinc transporter 10 (ZIP10) from Oryza sativa subsp. japonica (Rice).